The primary structure comprises 211 residues: Large ribosomal subunit protein bL9 (211 aa).

The segment at 180-211 (DDIGAAGMDDDDDDAPAPAQADPSSEESSEED) is disordered.

It belongs to the bacterial ribosomal protein bL9 family.

Binds to the 23S rRNA. This Jannaschia sp. (strain CCS1) protein is Large ribosomal subunit protein bL9.